The primary structure comprises 252 residues: Enolase-phosphatase E1 (252 aa).

Positions 14 and 16 each coordinate Mg(2+). Substrate contacts are provided by residues Ser-143–Ser-144 and Lys-177. Asp-202 provides a ligand contact to Mg(2+).

The protein belongs to the HAD-like hydrolase superfamily. MasA/MtnC family. In terms of assembly, monomer. The cofactor is Mg(2+).

It localises to the cytoplasm. The protein localises to the nucleus. The catalysed reaction is 5-methylsulfanyl-2,3-dioxopentyl phosphate + H2O = 1,2-dihydroxy-5-(methylsulfanyl)pent-1-en-3-one + phosphate. It participates in amino-acid biosynthesis; L-methionine biosynthesis via salvage pathway; L-methionine from S-methyl-5-thio-alpha-D-ribose 1-phosphate: step 3/6. It functions in the pathway amino-acid biosynthesis; L-methionine biosynthesis via salvage pathway; L-methionine from S-methyl-5-thio-alpha-D-ribose 1-phosphate: step 4/6. Its function is as follows. Bifunctional enzyme that catalyzes the enolization of 2,3-diketo-5-methylthiopentyl-1-phosphate (DK-MTP-1-P) into the intermediate 2-hydroxy-3-keto-5-methylthiopentenyl-1-phosphate (HK-MTPenyl-1-P), which is then dephosphorylated to form the acireductone 1,2-dihydroxy-3-keto-5-methylthiopentene (DHK-MTPene). This is Enolase-phosphatase E1 from Drosophila pseudoobscura pseudoobscura (Fruit fly).